Consider the following 370-residue polypeptide: Protein Brevis radix-like 3 (370 aa).

The BRX 1 domain maps to 140–221 (KEWVAQVEPG…NFEKVMELYN (82 aa)). Polar residues-rich tracts occupy residues 231–248 (LQTPPVSEDGGSQIQSVK) and 266–291 (PGSSGFASTPKLSSISGTKTETSSID). Positions 231–316 (LQTPPVSEDG…VSNASDMESE (86 aa)) are disordered. Residues 315 to 370 (SEWVEQDEPGIYITIRALPDGNRELRRVRFSRDKFGETHARLWWEQNRARIQQQYL) enclose the BRX 2 domain.

This sequence belongs to the BRX family. In terms of tissue distribution, expressed in roots.

It localises to the nucleus. In Arabidopsis thaliana (Mouse-ear cress), this protein is Protein Brevis radix-like 3 (BRXL3).